A 253-amino-acid polypeptide reads, in one-letter code: Coenzyme F420:L-glutamate ligase (253 aa).

Residues 9 to 12, 38 to 39, and K43 contribute to the GTP site; these read LPEI and ST. Position 113 (D113) interacts with a divalent metal cation. N116 is a GTP binding site. The a divalent metal cation site is built by D148, T149, and E206. 204–211 lines the GTP pocket; that stretch reads AGEGDDGT.

It belongs to the CofE family. In terms of assembly, homodimer. It depends on Mg(2+) as a cofactor. Mn(2+) is required as a cofactor. K(+) serves as cofactor.

It carries out the reaction oxidized coenzyme F420-0 + GTP + L-glutamate = oxidized coenzyme F420-1 + GDP + phosphate + H(+). The enzyme catalyses oxidized coenzyme F420-1 + GTP + L-glutamate = oxidized coenzyme F420-2 + GDP + phosphate + H(+). It functions in the pathway cofactor biosynthesis; coenzyme F420 biosynthesis. Its function is as follows. Catalyzes the GTP-dependent successive addition of two or more gamma-linked L-glutamates to the L-lactyl phosphodiester of 7,8-didemethyl-8-hydroxy-5-deazariboflavin (F420-0) to form coenzyme F420-0-glutamyl-glutamate (F420-2) or polyglutamated F420 derivatives. The protein is Coenzyme F420:L-glutamate ligase of Natronomonas pharaonis (strain ATCC 35678 / DSM 2160 / CIP 103997 / JCM 8858 / NBRC 14720 / NCIMB 2260 / Gabara) (Halobacterium pharaonis).